We begin with the raw amino-acid sequence, 91 residues long: ATP synthase subunit c (91 aa).

2 helical membrane-spanning segments follow: residues 4-24 (LTMCMLAAGFGMAIGAFGTGI) and 53-73 (IGLAMIESLAIYVLVVCLIIL).

Belongs to the ATPase C chain family. F-type ATPases have 2 components, F(1) - the catalytic core - and F(0) - the membrane proton channel. F(1) has five subunits: alpha(3), beta(3), gamma(1), delta(1), epsilon(1). F(0) has three main subunits: a(1), b(2) and c(10-14). The alpha and beta chains form an alternating ring which encloses part of the gamma chain. F(1) is attached to F(0) by a central stalk formed by the gamma and epsilon chains, while a peripheral stalk is formed by the delta and b chains.

The protein resides in the cell inner membrane. In terms of biological role, f(1)F(0) ATP synthase produces ATP from ADP in the presence of a proton or sodium gradient. F-type ATPases consist of two structural domains, F(1) containing the extramembraneous catalytic core and F(0) containing the membrane proton channel, linked together by a central stalk and a peripheral stalk. During catalysis, ATP synthesis in the catalytic domain of F(1) is coupled via a rotary mechanism of the central stalk subunits to proton translocation. Key component of the F(0) channel; it plays a direct role in translocation across the membrane. A homomeric c-ring of between 10-14 subunits forms the central stalk rotor element with the F(1) delta and epsilon subunits. This is ATP synthase subunit c from Geobacter metallireducens (strain ATCC 53774 / DSM 7210 / GS-15).